A 419-amino-acid polypeptide reads, in one-letter code: G protein-activated inward rectifier potassium channel 4 (419 aa).

The Cytoplasmic portion of the chain corresponds to 1–86 (MAGDSRNAMN…LFTTLVDLKW (86 aa)). S5 bears the Phosphoserine mark. The chain crosses the membrane as a helical span at residues 87–111 (RFNLLVFTMVYTITWLFFGFIWWLI). At 112 to 135 (AYVRGDLDHVGDQEWIPCVENLSG) the chain is on the extracellular side. An intramembrane region (helical; Pore-forming) is located at residues 136 to 147 (FVSAFLFSIETE). An intramembrane region (pore-forming) is located at residues 148-154 (TTIGYGF). The Selectivity filter motif lies at 149 to 154 (TIGYGF). Residues 155 to 163 (RVITEKCPE) lie on the Extracellular side of the membrane. Residues 164-185 (GIILLLVQAILGSIVNAFMVGC) traverse the membrane as a helical segment. Residues 186–419 (MFVKISQPKK…SVSRATRGSM (234 aa)) are Cytoplasmic-facing. Positions 380 to 390 (LPSPPLLGGCA) are enriched in low complexity. The tract at residues 380–419 (LPSPPLLGGCAEAEKEAEAEHDEEEEPNGLSVSRATRGSM) is disordered. Over residues 409–419 (LSVSRATRGSM) the composition is skewed to polar residues.

It belongs to the inward rectifier-type potassium channel (TC 1.A.2.1) family. KCNJ5 subfamily. Associates with KCNJ3/GIRK1 or KCNJ6/GRIK2 to form a G-protein-activated heteromultimer pore-forming unit. The resulting inward current is much larger. Most abundant in heart tissue where it is found predominantly in atria. Also found in brain, kidney, liver, spleen, lung and thymus.

It is found in the membrane. It catalyses the reaction K(+)(in) = K(+)(out). Its activity is regulated as follows. Heteromultimer composed of KCNJ3/GIRK1 and KCNJ5/GIRK4 is activated by phosphatidylinositol 4,5 biphosphate (PtdIns(4,5)P2). In terms of biological role, inward rectifier potassium channels are characterized by a greater tendency to allow potassium to flow into the cell rather than out of it. Their voltage dependence is regulated by the concentration of extracellular potassium; as external potassium is raised, the voltage range of the channel opening shifts to more positive voltages. The inward rectification is mainly due to the blockage of outward current by internal magnesium. Can be blocked by external barium. This potassium channel is controlled by G proteins. This Rattus norvegicus (Rat) protein is G protein-activated inward rectifier potassium channel 4 (Kcnj5).